A 276-amino-acid polypeptide reads, in one-letter code: Non-homologous end joining protein Ku (276 aa).

Positions 11–177 (ISFGLVHIPI…PEEIRSMEPL (167 aa)) constitute a Ku domain. Positions 256 to 276 (QVKTQQKKEAAPKKERRRKTS) are disordered.

This sequence belongs to the prokaryotic Ku family. Homodimer. Interacts with LigD.

Functionally, with LigD forms a non-homologous end joining (NHEJ) DNA repair enzyme, which repairs dsDNA breaks with reduced fidelity. Binds linear dsDNA with 5'- and 3'- overhangs but not closed circular dsDNA nor ssDNA. Recruits and stimulates the ligase activity of LigD. The chain is Non-homologous end joining protein Ku from Heliobacterium modesticaldum (strain ATCC 51547 / Ice1).